A 107-amino-acid polypeptide reads, in one-letter code: Iron-binding protein IscA (107 aa).

Fe cation is bound by residues Cys35, Cys99, and Cys101.

It belongs to the HesB/IscA family. In terms of assembly, homodimer; may form tetramers and higher multimers. Requires Fe cation as cofactor.

Is able to transfer iron-sulfur clusters to apo-ferredoxin. Multiple cycles of [2Fe2S] cluster formation and transfer are observed, suggesting that IscA acts catalytically. Recruits intracellular free iron so as to provide iron for the assembly of transient iron-sulfur cluster in IscU in the presence of IscS, L-cysteine and the thioredoxin reductase system TrxA/TrxB. The sequence is that of Iron-binding protein IscA from Yersinia enterocolitica serotype O:8 / biotype 1B (strain NCTC 13174 / 8081).